Consider the following 185-residue polypeptide: Peptidyl-tRNA hydrolase (185 aa).

Y14 provides a ligand contact to tRNA. H19 functions as the Proton acceptor in the catalytic mechanism. 3 residues coordinate tRNA: Y64, N66, and N112.

This sequence belongs to the PTH family. Monomer.

It is found in the cytoplasm. It carries out the reaction an N-acyl-L-alpha-aminoacyl-tRNA + H2O = an N-acyl-L-amino acid + a tRNA + H(+). Hydrolyzes ribosome-free peptidyl-tRNAs (with 1 or more amino acids incorporated), which drop off the ribosome during protein synthesis, or as a result of ribosome stalling. In terms of biological role, catalyzes the release of premature peptidyl moieties from peptidyl-tRNA molecules trapped in stalled 50S ribosomal subunits, and thus maintains levels of free tRNAs and 50S ribosomes. The polypeptide is Peptidyl-tRNA hydrolase (Shouchella clausii (strain KSM-K16) (Alkalihalobacillus clausii)).